Reading from the N-terminus, the 451-residue chain is Tubulin beta-1 chain (451 aa).

Positions 1-4 (MREI) match the MREI motif motif. Positions 11, 69, 138, 142, 143, and 144 each coordinate GTP. E69 lines the Mg(2+) pocket. A Phosphoserine; by CDK1 modification is found at S172. 2 residues coordinate GTP: N204 and N226. Positions 430 to 451 (AGLEDSEEDVEEAEVEAEDKDH) are disordered. The segment covering 433–451 (EDSEEDVEEAEVEAEDKDH) has biased composition (acidic residues). Residue S435 is modified to Phosphoserine. Residue E440 is modified to 5-glutamyl polyglutamate.

The protein belongs to the tubulin family. Dimer of alpha and beta chains. A typical microtubule is a hollow water-filled tube with an outer diameter of 25 nm and an inner diameter of 15 nM. Alpha-beta heterodimers associate head-to-tail to form protofilaments running lengthwise along the microtubule wall with the beta-tubulin subunit facing the microtubule plus end conferring a structural polarity. Microtubules usually have 13 protofilaments but different protofilament numbers can be found in some organisms and specialized cells. Interacts with RANBP10. Mg(2+) is required as a cofactor. Some glutamate residues at the C-terminus are polyglycylated, resulting in polyglycine chains on the gamma-carboxyl group. Glycylation is mainly limited to tubulin incorporated into axonemes (cilia and flagella) whereas glutamylation is prevalent in neuronal cells, centrioles, axonemes, and the mitotic spindle. Both modifications can coexist on the same protein on adjacent residues, and lowering polyglycylation levels increases polyglutamylation, and reciprocally. Cilia and flagella glycylation is required for their stability and maintenance. Flagella glycylation controls sperm motility. In terms of processing, some glutamate residues at the C-terminus are polyglutamylated, resulting in polyglutamate chains on the gamma-carboxyl group. Polyglutamylation plays a key role in microtubule severing by spastin (SPAST). SPAST preferentially recognizes and acts on microtubules decorated with short polyglutamate tails: severing activity by SPAST increases as the number of glutamates per tubulin rises from one to eight, but decreases beyond this glutamylation threshold. Glutamylation is also involved in cilia motility. Post-translationally, phosphorylated on Ser-172 by CDK1 during the cell cycle, from metaphase to telophase, but not in interphase. This phosphorylation inhibits tubulin incorporation into microtubules.

It is found in the cytoplasm. It localises to the cytoskeleton. Tubulin is the major constituent of microtubules, a cylinder consisting of laterally associated linear protofilaments composed of alpha- and beta-tubulin heterodimers. Microtubules grow by the addition of GTP-tubulin dimers to the microtubule end, where a stabilizing cap forms. Below the cap, tubulin dimers are in GDP-bound state, owing to GTPase activity of alpha-tubulin. This is Tubulin beta-1 chain (Tubb1) from Mus musculus (Mouse).